A 460-amino-acid chain; its full sequence is Elongation factor 1-alpha (460 aa).

Position 2 is a n,N,N-trimethylglycine (G2). The residue at position 3 (K3) is an N6,N6-dimethyllysine; alternate. K3 carries the post-translational modification N6-methyllysine; alternate. The tr-type G domain occupies 6–241 (KQHINIVVIG…DAIEPPVRPT (236 aa)). Residues 15–22 (GHVDSGKS) are G1. 15 to 22 (GHVDSGKS) lines the GTP pocket. The residue at position 31 (K31) is an N6-methyllysine. The G2 stretch occupies residues 71–75 (GITID). N6,N6,N6-trimethyllysine is present on K80. The G3 stretch occupies residues 92 to 95 (DAPG). GTP-binding positions include 92–96 (DAPGH) and 154–157 (NKMD). Residues 154–157 (NKMD) form a G4 region. Positions 193-195 (SGF) are G5. An N6,N6-dimethyllysine; alternate modification is found at K317. K317 carries the post-translational modification N6-methyllysine; alternate. K391 carries the N6-methyllysine modification.

This sequence belongs to the TRAFAC class translation factor GTPase superfamily. Classic translation factor GTPase family. EF-Tu/EF-1A subfamily.

It localises to the cytoplasm. This protein promotes the GTP-dependent binding of aminoacyl-tRNA to the A-site of ribosomes during protein biosynthesis. This is Elongation factor 1-alpha (tef1) from Aspergillus oryzae (strain ATCC 42149 / RIB 40) (Yellow koji mold).